The chain runs to 102 residues: ATP-dependent Clp protease adapter protein ClpS (102 aa).

The protein belongs to the ClpS family. As to quaternary structure, binds to the N-terminal domain of the chaperone ClpA.

Functionally, involved in the modulation of the specificity of the ClpAP-mediated ATP-dependent protein degradation. This Dechloromonas aromatica (strain RCB) protein is ATP-dependent Clp protease adapter protein ClpS.